Here is a 467-residue protein sequence, read N- to C-terminus: Asparagine--tRNA ligase (467 aa).

It belongs to the class-II aminoacyl-tRNA synthetase family. As to quaternary structure, homodimer.

It localises to the cytoplasm. It carries out the reaction tRNA(Asn) + L-asparagine + ATP = L-asparaginyl-tRNA(Asn) + AMP + diphosphate + H(+). The sequence is that of Asparagine--tRNA ligase from Glaesserella parasuis serovar 5 (strain SH0165) (Haemophilus parasuis).